Here is a 119-residue protein sequence, read N- to C-terminus: Large ribosomal subunit protein bL20 (119 aa).

Belongs to the bacterial ribosomal protein bL20 family.

Its function is as follows. Binds directly to 23S ribosomal RNA and is necessary for the in vitro assembly process of the 50S ribosomal subunit. It is not involved in the protein synthesizing functions of that subunit. This is Large ribosomal subunit protein bL20 from Jannaschia sp. (strain CCS1).